The chain runs to 113 residues: T cell receptor alpha variable 5 (113 aa).

Residues M1–G22 form the signal peptide. The 91-residue stretch at E23–S113 folds into the Ig-like domain. The N-linked (GlcNAc...) asparagine glycan is linked to N42. Cysteines 43 and 110 form a disulfide.

Alpha-beta TR is a heterodimer composed of an alpha and beta chain; disulfide-linked. The alpha-beta TR is associated with the transmembrane signaling CD3 coreceptor proteins to form the TR-CD3 (TcR or TCR). The assembly of alpha-beta TR heterodimers with CD3 occurs in the endoplasmic reticulum where a single alpha-beta TR heterodimer associates with one CD3D-CD3E heterodimer, one CD3G-CD3E heterodimer and one CD247 homodimer forming a stable octameric structure. CD3D-CD3E and CD3G-CD3E heterodimers preferentially associate with TR alpha and TR beta chains, respectively. The association of the CD247 homodimer is the last step of TcR assembly in the endoplasmic reticulum and is required for transport to the cell surface.

The protein resides in the cell membrane. V region of the variable domain of T cell receptor (TR) alpha chain that participates in the antigen recognition. Alpha-beta T cell receptors are antigen specific receptors which are essential to the immune response and are present on the cell surface of T lymphocytes. Recognize peptide-major histocompatibility (MH) (pMH) complexes that are displayed by antigen presenting cells (APC), a prerequisite for efficient T cell adaptive immunity against pathogens. Binding of alpha-beta TR to pMH complex initiates TR-CD3 clustering on the cell surface and intracellular activation of LCK that phosphorylates the ITAM motifs of CD3G, CD3D, CD3E and CD247 enabling the recruitment of ZAP70. In turn ZAP70 phosphorylates LAT, which recruits numerous signaling molecules to form the LAT signalosome. The LAT signalosome propagates signal branching to three major signaling pathways, the calcium, the mitogen-activated protein kinase (MAPK) kinase and the nuclear factor NF-kappa-B (NF-kB) pathways, leading to the mobilization of transcription factors that are critical for gene expression and essential for T cell growth and differentiation. The T cell repertoire is generated in the thymus, by V-(D)-J rearrangement. This repertoire is then shaped by intrathymic selection events to generate a peripheral T cell pool of self-MH restricted, non-autoaggressive T cells. Post-thymic interaction of alpha-beta TR with the pMH complexes shapes TR structural and functional avidity. This chain is T cell receptor alpha variable 5, found in Homo sapiens (Human).